The chain runs to 326 residues: Protoheme IX farnesyltransferase (326 aa).

Transmembrane regions (helical) follow at residues 35–55 (LIPLLLATTLGGMALTEGWPL), 60–80 (LVCTLGGGALASAAAGVLNCL), 106–126 (SAFIGAIACTLAAAMLLVSGV), 129–149 (LAAGLSLLGLCSYVLLYTALL), 157–177 (IVIGGVAGAIPPLVGAAAATG), 185–205 (WLFALVMVWTPAHFWALALLL), 242–262 (GFGVLALPTGGVFYGLILLPF), and 283–303 (AKGLFRWSILYLFGICLLLIL).

Belongs to the UbiA prenyltransferase family. Protoheme IX farnesyltransferase subfamily.

It localises to the cell inner membrane. It catalyses the reaction heme b + (2E,6E)-farnesyl diphosphate + H2O = Fe(II)-heme o + diphosphate. It participates in porphyrin-containing compound metabolism; heme O biosynthesis; heme O from protoheme: step 1/1. Converts heme B (protoheme IX) to heme O by substitution of the vinyl group on carbon 2 of heme B porphyrin ring with a hydroxyethyl farnesyl side group. In Parasynechococcus marenigrum (strain WH8102), this protein is Protoheme IX farnesyltransferase.